The sequence spans 196 residues: Protein TEX261 (196 aa).

A run of 5 helical transmembrane segments spans residues 3 to 23, 42 to 62, 70 to 90, 97 to 117, and 125 to 145; these read FMYL…TLAV, SRII…LYVF, IGVG…FPFI, FILS…FFAE, and VLAY…VSLS.

The protein belongs to the SVP26 family.

The protein localises to the membrane. This Pongo abelii (Sumatran orangutan) protein is Protein TEX261 (TEX261).